Here is a 233-residue protein sequence, read N- to C-terminus: Cell number regulator 8 (233 aa).

Helical transmembrane passes span valine 85–valine 101 and cysteine 115–phenylalanine 138.

This sequence belongs to the cornifelin family. In terms of tissue distribution, expressed in roots, coleoptiles, leaves, stalks, apical meristems, immature ears, embryos, endosperm, pericarp, silks, tassel spikelets and pollen. Highest expression in the pericarp and stalks.

It localises to the membrane. The polypeptide is Cell number regulator 8 (CNR8) (Zea mays (Maize)).